Consider the following 145-residue polypeptide: Transcriptional regulator MraZ (145 aa).

SpoVT-AbrB domains follow at residues 7 to 54 (NATN…GPDL) and 83 to 126 (GVFM…QPQA).

Belongs to the MraZ family. In terms of assembly, forms oligomers.

Its subcellular location is the cytoplasm. The protein localises to the nucleoid. The sequence is that of Transcriptional regulator MraZ from Rhizobium leguminosarum bv. trifolii (strain WSM2304).